A 551-amino-acid chain; its full sequence is uncharacterized protein (551 aa).

At 1 to 7 (MKKNSSV) the chain is on the cytoplasmic side. A helical transmembrane segment spans residues 8-28 (VFFLVGLSQFVTMAFLIIGSI). Over 29 to 88 (TAPIFKQIGYSKYDEITYGTFGYCKEGSCSKASYNYHPDELSDSDSNWKLNSNARSILGK) the chain is Vacuolar. The chain crosses the membrane as a helical span at residues 89–109 (IIFITPIAAGLNFLGFLCTIM). Residues 110 to 135 (SVLLINVLSSDRVGSASAIMFFVNLT) are Cytoplasmic-facing. The chain crosses the membrane as a helical span at residues 136–156 (FSTLGFLSASLICIVVFLLFY). The Vacuolar portion of the chain corresponds to 157-160 (PHVT). The chain crosses the membrane as a helical span at residues 161–181 (WCSWVLIPGAALSLLVIPLIF). Topologically, residues 182–551 (SAYSRSSGSR…TSLNNPYGFR (370 aa)) are cytoplasmic. Serine 224 and serine 232 each carry phosphoserine. The interval 280 to 341 (AKDMENSNGS…NGSNTSNNIN (62 aa)) is disordered. The span at 307 to 320 (TSTYSVIESESGLK) shows a compositional bias: polar residues. Residues 321–341 (NGSVSNNYVRNNGSNTSNNIN) show a composition bias toward low complexity. Serine 363 carries the phosphoserine modification.

Forms homo dimers or homooligomers in MCC microdomains. Interacts with BOI2 and RHO3, two key regulators of secretion.

It localises to the vacuole membrane. The protein resides in the cell membrane. Functionally, protein involved in secretion and cell wall organization. Contributes to cell surface-related functions as a auxiliary component of MCC/eisosome that specifically interacts with the secretory pathway. This is an uncharacterized protein from Saccharomyces cerevisiae (strain ATCC 204508 / S288c) (Baker's yeast).